Consider the following 130-residue polypeptide: MAENQYYGTGRRKSSAARVFIKPGSGNIVINQRSLEQYFGRETARMVVRQPLELTDMVGKFDLYITVKGGGISGQAGAIRHGITRALMEYDETLRGELRKAGFVTRDARQVERKKVGLRKARRRPQFSKR.

Belongs to the universal ribosomal protein uS9 family.

The polypeptide is Small ribosomal subunit protein uS9 (Serratia proteamaculans (strain 568)).